We begin with the raw amino-acid sequence, 256 residues long: Protein FixA (256 aa).

This sequence belongs to the ETF beta-subunit/FixA family. As to quaternary structure, heterodimer of FixA and FixB.

It participates in amine and polyamine metabolism; carnitine metabolism. In terms of biological role, required for anaerobic carnitine reduction. May bring reductant to CaiA. In Escherichia coli O139:H28 (strain E24377A / ETEC), this protein is Protein FixA.